We begin with the raw amino-acid sequence, 88 residues long: Small ribosomal subunit protein uS15c (88 aa).

The protein belongs to the universal ribosomal protein uS15 family. In terms of assembly, part of the 30S ribosomal subunit.

The protein resides in the plastid. Its subcellular location is the chloroplast. The polypeptide is Small ribosomal subunit protein uS15c (rps15) (Capsella bursa-pastoris (Shepherd's purse)).